The following is a 120-amino-acid chain: MLKFTEEHEWLKIDGDVATVGITEHAAGQLGDLVFVELPEAGSTFSKGDTAATVESVKAASDVYCPLDGEIVEANQAIVDDPSLVNSDPQGAAWFFKLKLADPDAAKALLDEAAYKELVA.

A Lipoyl-binding domain is found at V17–K99. Position 58 is an N6-lipoyllysine (K58).

This sequence belongs to the GcvH family. The glycine cleavage system is composed of four proteins: P, T, L and H. (R)-lipoate is required as a cofactor.

In terms of biological role, the glycine cleavage system catalyzes the degradation of glycine. The H protein shuttles the methylamine group of glycine from the P protein to the T protein. The chain is Glycine cleavage system H protein from Sinorhizobium medicae (strain WSM419) (Ensifer medicae).